The primary structure comprises 343 residues: Ribosomal RNA small subunit methyltransferase C (343 aa).

The protein belongs to the methyltransferase superfamily. RsmC family. Monomer.

The protein resides in the cytoplasm. The enzyme catalyses guanosine(1207) in 16S rRNA + S-adenosyl-L-methionine = N(2)-methylguanosine(1207) in 16S rRNA + S-adenosyl-L-homocysteine + H(+). Functionally, specifically methylates the guanine in position 1207 of 16S rRNA in the 30S particle. This is Ribosomal RNA small subunit methyltransferase C from Shigella sonnei (strain Ss046).